Consider the following 152-residue polypeptide: Small ribosomal subunit protein uS11 (152 aa).

The disordered stretch occupies residues 133–152 (VTPIPTDSTRRKSGHRGRRL). Over residues 143 to 152 (RKSGHRGRRL) the composition is skewed to basic residues.

Belongs to the universal ribosomal protein uS11 family. Component of the small ribosomal subunit. Part of the small subunit (SSU) processome, composed of more than 70 proteins and the RNA chaperone small nucleolar RNA (snoRNA) U3.

Its subcellular location is the cytoplasm. It localises to the nucleus. It is found in the nucleolus. Component of the small ribosomal subunit. The ribosome is a large ribonucleoprotein complex responsible for the synthesis of proteins in the cell. Part of the small subunit (SSU) processome, first precursor of the small eukaryotic ribosomal subunit. During the assembly of the SSU processome in the nucleolus, many ribosome biogenesis factors, an RNA chaperone and ribosomal proteins associate with the nascent pre-rRNA and work in concert to generate RNA folding, modifications, rearrangements and cleavage as well as targeted degradation of pre-ribosomal RNA by the RNA exosome. The polypeptide is Small ribosomal subunit protein uS11 (rps14) (Dictyostelium discoideum (Social amoeba)).